A 117-amino-acid chain; its full sequence is uncharacterized protein (117 aa).

Residues 1–38 form the signal peptide; the sequence is MIIDSSRIPSFTQLHSTMTRAPLLLLCVALVLLGHVNG.

It localises to the secreted. This is an uncharacterized protein from Homo sapiens (Human).